The primary structure comprises 573 residues: Potassium-transporting ATPase potassium-binding subunit (573 aa).

The next 10 helical transmembrane spans lie at 6–26 (ILFA…GSYI), 66–86 (FFSL…ILLL), 135–155 (ALAV…IALI), 177–197 (IFWI…FQGV), 257–277 (IQMV…GKWV), 283–303 (GWLI…VMTI), 382–402 (IFGG…LAVF), 428–448 (MFAL…AAVI), 493–513 (ITIA…VIML), and 537–557 (FIFA…TIFP).

It belongs to the KdpA family. As to quaternary structure, the system is composed of three essential subunits: KdpA, KdpB and KdpC.

Its subcellular location is the cell inner membrane. Its function is as follows. Part of the high-affinity ATP-driven potassium transport (or Kdp) system, which catalyzes the hydrolysis of ATP coupled with the electrogenic transport of potassium into the cytoplasm. This subunit binds the periplasmic potassium ions and delivers the ions to the membrane domain of KdpB through an intramembrane tunnel. This Francisella tularensis subsp. novicida (strain U112) protein is Potassium-transporting ATPase potassium-binding subunit.